Reading from the N-terminus, the 130-residue chain is Con-Ins M1 (130 aa).

The signal sequence occupies residues methionine 1–serine 21. 4 cysteine pairs are disulfide-bonded: cysteine 29–cysteine 107, cysteine 41–cysteine 110, cysteine 53–cysteine 123, and cysteine 109–cysteine 114. Proline 34 is subject to 4-hydroxyproline; partial. The propeptide at alanine 59–arginine 92 is c peptide. Glutamate 118 carries the post-translational modification 4-carboxyglutamate; partial. Position 129 is a serine amide (serine 129).

Belongs to the insulin family. Heterodimer of A and B chains; disulfide-linked. Expressed by the venom gland.

Its subcellular location is the secreted. Its function is as follows. This venom insulin facilitates prey capture by rapidly inducing hypoglycemic shock. Intraperitoneal injection of this peptide into zebrafish lowers blood glucose with the same potency than human insulin. In vivo, when applied to water, this peptide reduces overall locomotor activity of zebrafish larvae, observed as a significant decrease in the percentage of time spent swimming and movement frequency. This Conus marmoreus (Marble cone) protein is Con-Ins M1.